The chain runs to 110 residues: Hydrogenase maturation factor HypA (110 aa).

Histidine 2 serves as a coordination point for Ni(2+). Zn(2+)-binding residues include cysteine 73, cysteine 76, cysteine 87, and cysteine 89.

The protein belongs to the HypA/HybF family.

Its function is as follows. Involved in the maturation of [NiFe] hydrogenases. Required for nickel insertion into the metal center of the hydrogenase. This Archaeoglobus fulgidus (strain ATCC 49558 / DSM 4304 / JCM 9628 / NBRC 100126 / VC-16) protein is Hydrogenase maturation factor HypA.